Consider the following 376-residue polypeptide: Multiphosphoryl transfer protein (376 aa).

The region spanning Phe-2–Glu-142 is the PTS EIIA type-2 domain. The active-site Tele-phosphohistidine intermediate; for EIIA activity is His-62. Phosphohistidine; by HPr is present on His-62. The interval Thr-156 to Asp-284 is m domain. Positions Val-285–Gly-375 constitute an HPr domain. His-299 (pros-phosphohistidine intermediate; for HPr activity) is an active-site residue. A Phosphohistidine; by EI modification is found at His-299.

The protein localises to the cytoplasm. Functionally, the phosphoenolpyruvate-dependent sugar phosphotransferase system (sugar PTS), a major carbohydrate active transport system, catalyzes the phosphorylation of incoming sugar substrates concomitantly with their translocation across the cell membrane. The enzyme II FruAB PTS system is involved in fructose transport. This Salmonella typhimurium (strain LT2 / SGSC1412 / ATCC 700720) protein is Multiphosphoryl transfer protein (fruB).